The chain runs to 189 residues: GTPase NRas (189 aa).

Residues Gly-10–Ala-18 and Val-29–Asp-30 each bind GTP. The Effector region signature appears at Tyr-32–Tyr-40. Asp-57 to Gln-61 lines the GTP pocket. Residue Ser-89 is modified to Phosphoserine. GTP is bound at residue Asn-116–Asp-119. Positions Tyr-166 to Ser-185 are hypervariable region. Lys-170 participates in a covalent cross-link: Glycyl lysine isopeptide (Lys-Gly) (interchain with G-Cter in ubiquitin). Cys-181 carries the S-palmitoyl cysteine lipid modification. The S-farnesyl cysteine moiety is linked to residue Cys-186. Positions Ala-187 to Met-189 are cleaved as a propeptide — removed in mature form.

This sequence belongs to the small GTPase superfamily. Ras family. In terms of assembly, interacts (active GTP-bound form preferentially) with RGS14. Interacts (active GTP-bound form) with RASSF7. Interacts (active GTP-bound form) with both SHOC2 and PP1c (all isoforms) to form a tertiary complex; SHOC2 and PP1c preferably bind M-Ras/MRAS, but they also bind K-Ras/KRAS, N-Ras/NRAS and H-Ras/HRAS. In terms of processing, palmitoylated by the ZDHHC9-GOLGA7 complex. Depalmitoylated by ABHD17A, ABHD17B and ABHD17C. A continuous cycle of de- and re-palmitoylation regulates rapid exchange between plasma membrane and Golgi. Post-translationally, acetylation at Lys-104 prevents interaction with guanine nucleotide exchange factors (GEFs). Ubiquitinated by the BCR(LZTR1) E3 ubiquitin ligase complex at Lys-170 in a non-degradative manner, leading to inhibit Ras signaling by decreasing Ras association with membranes. In terms of processing, phosphorylation at Ser-89 enhances NRAS association with its downstream effectors.

Its subcellular location is the cell membrane. The protein localises to the golgi apparatus membrane. It catalyses the reaction GTP + H2O = GDP + phosphate + H(+). Its activity is regulated as follows. Alternates between an inactive form bound to GDP and an active form bound to GTP. Activated by a guanine nucleotide-exchange factor (GEF) and inactivated by a GTPase-activating protein (GAP). In terms of biological role, ras proteins bind GDP/GTP and possess intrinsic GTPase activity. This is GTPase NRas (NRAS) from Monodelphis domestica (Gray short-tailed opossum).